A 173-amino-acid polypeptide reads, in one-letter code: NADH-ubiquinone oxidoreductase chain 6 (173 aa).

4 helical membrane-spanning segments follow: residues 12–32, 47–67, 94–114, and 142–162; these read VFWLIGVSSNISVYYGVVSLV, GSFLALVLFLIYLGGMLVIFA, VVLAVVFVLVGWGWWGVGECG, and GALMMAMFGLFLTFFIVLVLV.

It belongs to the complex I subunit 6 family.

The protein localises to the mitochondrion membrane. The catalysed reaction is a ubiquinone + NADH + 5 H(+)(in) = a ubiquinol + NAD(+) + 4 H(+)(out). Core subunit of the mitochondrial membrane respiratory chain NADH dehydrogenase (Complex I) that is believed to belong to the minimal assembly required for catalysis. Complex I functions in the transfer of electrons from NADH to the respiratory chain. The immediate electron acceptor for the enzyme is believed to be ubiquinone. This Pelomedusa subrufa (African side-necked turtle) protein is NADH-ubiquinone oxidoreductase chain 6 (MT-ND6).